A 203-amino-acid polypeptide reads, in one-letter code: Dual-action ribosomal maturation protein DarP (203 aa).

Disordered stretches follow at residues 1-31 (MRPM…SKSQ) and 183-203 (GASD…DDEA). Positions 186–203 (DSDDEAAGDAGDDHDDEA) are enriched in acidic residues.

It belongs to the DarP family.

The protein localises to the cytoplasm. Member of a network of 50S ribosomal subunit biogenesis factors which assembles along the 30S-50S interface, preventing incorrect 23S rRNA structures from forming. Promotes peptidyl transferase center (PTC) maturation. This chain is Dual-action ribosomal maturation protein DarP, found in Burkholderia cenocepacia (strain ATCC BAA-245 / DSM 16553 / LMG 16656 / NCTC 13227 / J2315 / CF5610) (Burkholderia cepacia (strain J2315)).